Reading from the N-terminus, the 467-residue chain is ATP synthase subunit beta (467 aa).

153–160 (GGAGVGKT) is an ATP binding site.

It belongs to the ATPase alpha/beta chains family. In terms of assembly, F-type ATPases have 2 components, CF(1) - the catalytic core - and CF(0) - the membrane proton channel. CF(1) has five subunits: alpha(3), beta(3), gamma(1), delta(1), epsilon(1). CF(0) has three main subunits: a(1), b(2) and c(9-12). The alpha and beta chains form an alternating ring which encloses part of the gamma chain. CF(1) is attached to CF(0) by a central stalk formed by the gamma and epsilon chains, while a peripheral stalk is formed by the delta and b chains.

It localises to the cell membrane. The enzyme catalyses ATP + H2O + 4 H(+)(in) = ADP + phosphate + 5 H(+)(out). Produces ATP from ADP in the presence of a proton gradient across the membrane. The catalytic sites are hosted primarily by the beta subunits. The chain is ATP synthase subunit beta from Lactiplantibacillus plantarum (strain ATCC BAA-793 / NCIMB 8826 / WCFS1) (Lactobacillus plantarum).